A 208-amino-acid chain; its full sequence is uncharacterized protein (208 aa).

Residues 124-208 (KKTGSSNART…PSFGKYSSLA (85 aa)) form a disordered region. The segment covering 133-170 (TPDEGKKAKNAPEEEKVKTSGSEDAKGEESAVEGKEPE) has biased composition (basic and acidic residues).

The protein localises to the golgi apparatus. This is an uncharacterized protein from Encephalitozoon cuniculi (strain GB-M1) (Microsporidian parasite).